Consider the following 122-residue polypeptide: Small ribosomal subunit protein uS13 (122 aa).

The disordered stretch occupies residues 93-122 (RRSLPVRGQRTHTNARTRKGPAKPIAGKKK).

This sequence belongs to the universal ribosomal protein uS13 family. In terms of assembly, part of the 30S ribosomal subunit. Forms a loose heterodimer with protein S19. Forms two bridges to the 50S subunit in the 70S ribosome.

Functionally, located at the top of the head of the 30S subunit, it contacts several helices of the 16S rRNA. In the 70S ribosome it contacts the 23S rRNA (bridge B1a) and protein L5 of the 50S subunit (bridge B1b), connecting the 2 subunits; these bridges are implicated in subunit movement. Contacts the tRNAs in the A and P-sites. The polypeptide is Small ribosomal subunit protein uS13 (Chelativorans sp. (strain BNC1)).